Consider the following 156-residue polypeptide: ATP synthase subunit b 2 (156 aa).

The helical transmembrane segment at 7–29 (LLGQAISFAIFVWFCMKYVWPPV) threads the bilayer.

The protein belongs to the ATPase B chain family. In terms of assembly, F-type ATPases have 2 components, F(1) - the catalytic core - and F(0) - the membrane proton channel. F(1) has five subunits: alpha(3), beta(3), gamma(1), delta(1), epsilon(1). F(0) has three main subunits: a(1), b(2) and c(10-14). The alpha and beta chains form an alternating ring which encloses part of the gamma chain. F(1) is attached to F(0) by a central stalk formed by the gamma and epsilon chains, while a peripheral stalk is formed by the delta and b chains.

The protein localises to the cell inner membrane. Its function is as follows. F(1)F(0) ATP synthase produces ATP from ADP in the presence of a proton or sodium gradient. F-type ATPases consist of two structural domains, F(1) containing the extramembraneous catalytic core and F(0) containing the membrane proton channel, linked together by a central stalk and a peripheral stalk. During catalysis, ATP synthesis in the catalytic domain of F(1) is coupled via a rotary mechanism of the central stalk subunits to proton translocation. Component of the F(0) channel, it forms part of the peripheral stalk, linking F(1) to F(0). This chain is ATP synthase subunit b 2, found in Marinomonas sp. (strain MWYL1).